We begin with the raw amino-acid sequence, 171 residues long: Glutamyl-tRNA(Gln) amidotransferase subunit F, mitochondrial (171 aa).

This sequence belongs to the GatF family. In terms of assembly, subunit of the heterotrimeric GatFAB amidotransferase (AdT) complex, composed of A, B and F subunits.

It localises to the mitochondrion inner membrane. It catalyses the reaction L-glutamyl-tRNA(Gln) + L-glutamine + ATP + H2O = L-glutaminyl-tRNA(Gln) + L-glutamate + ADP + phosphate + H(+). Functionally, allows the formation of correctly charged Gln-tRNA(Gln) through the transamidation of misacylated Glu-tRNA(Gln) in the mitochondria. The reaction takes place in the presence of glutamine and ATP through an activated gamma-phospho-Glu-tRNA(Gln). Required for proper protein synthesis within the mitochondrion. This chain is Glutamyl-tRNA(Gln) amidotransferase subunit F, mitochondrial, found in Zygosaccharomyces rouxii (strain ATCC 2623 / CBS 732 / NBRC 1130 / NCYC 568 / NRRL Y-229).